A 585-amino-acid chain; its full sequence is Pyruvate kinase (585 aa).

Arginine 32 is a binding site for substrate. The K(+) site is built by asparagine 34, serine 36, aspartate 66, and threonine 67. Residue 34–37 (NFSH) participates in ATP binding. ATP contacts are provided by arginine 73 and lysine 156. Glutamate 221 is a Mg(2+) binding site. The substrate site is built by glycine 244, aspartate 245, and threonine 277. Aspartate 245 serves as a coordination point for Mg(2+).

Belongs to the pyruvate kinase family. This sequence in the C-terminal section; belongs to the PEP-utilizing enzyme family. Mg(2+) serves as cofactor. Requires K(+) as cofactor.

It catalyses the reaction pyruvate + ATP = phosphoenolpyruvate + ADP + H(+). It functions in the pathway carbohydrate degradation; glycolysis; pyruvate from D-glyceraldehyde 3-phosphate: step 5/5. In Staphylococcus epidermidis (strain ATCC 35984 / DSM 28319 / BCRC 17069 / CCUG 31568 / BM 3577 / RP62A), this protein is Pyruvate kinase (pyk).